Here is a 657-residue protein sequence, read N- to C-terminus: tRNA 5-methylaminomethyl-2-thiouridine biosynthesis bifunctional protein MnmC (657 aa).

The segment at 1-239 (MTDRIVPATL…KRAMLVGEFA (239 aa)) is tRNA (mnm(5)s(2)U34)-methyltransferase. The segment at 263-657 (IGAGLAGCAV…VRALRHGRVA (395 aa)) is FAD-dependent cmnm(5)s(2)U34 oxidoreductase.

The protein in the N-terminal section; belongs to the methyltransferase superfamily. tRNA (mnm(5)s(2)U34)-methyltransferase family. This sequence in the C-terminal section; belongs to the DAO family. FAD serves as cofactor.

The protein localises to the cytoplasm. The catalysed reaction is 5-aminomethyl-2-thiouridine(34) in tRNA + S-adenosyl-L-methionine = 5-methylaminomethyl-2-thiouridine(34) in tRNA + S-adenosyl-L-homocysteine + H(+). Functionally, catalyzes the last two steps in the biosynthesis of 5-methylaminomethyl-2-thiouridine (mnm(5)s(2)U) at the wobble position (U34) in tRNA. Catalyzes the FAD-dependent demodification of cmnm(5)s(2)U34 to nm(5)s(2)U34, followed by the transfer of a methyl group from S-adenosyl-L-methionine to nm(5)s(2)U34, to form mnm(5)s(2)U34. This chain is tRNA 5-methylaminomethyl-2-thiouridine biosynthesis bifunctional protein MnmC, found in Burkholderia mallei (strain SAVP1).